A 270-amino-acid chain; its full sequence is ParA family protein MPN_688 (270 aa).

This sequence belongs to the ParA family.

This is ParA family protein MPN_688 from Mycoplasma pneumoniae (strain ATCC 29342 / M129 / Subtype 1) (Mycoplasmoides pneumoniae).